Consider the following 415-residue polypeptide: Serine--tRNA ligase (415 aa).

230 to 232 contacts L-serine; that stretch reads TAE. 261-263 contributes to the ATP binding site; sequence RKE. Glu-284 is a binding site for L-serine. Residue 348-351 coordinates ATP; it reads EISS. L-serine is bound at residue Ser-382.

Belongs to the class-II aminoacyl-tRNA synthetase family. Type-1 seryl-tRNA synthetase subfamily. Homodimer. The tRNA molecule binds across the dimer.

It is found in the cytoplasm. The enzyme catalyses tRNA(Ser) + L-serine + ATP = L-seryl-tRNA(Ser) + AMP + diphosphate + H(+). The catalysed reaction is tRNA(Sec) + L-serine + ATP = L-seryl-tRNA(Sec) + AMP + diphosphate + H(+). Its pathway is aminoacyl-tRNA biosynthesis; selenocysteinyl-tRNA(Sec) biosynthesis; L-seryl-tRNA(Sec) from L-serine and tRNA(Sec): step 1/1. Its function is as follows. Catalyzes the attachment of serine to tRNA(Ser). Is also able to aminoacylate tRNA(Sec) with serine, to form the misacylated tRNA L-seryl-tRNA(Sec), which will be further converted into selenocysteinyl-tRNA(Sec). The sequence is that of Serine--tRNA ligase from Sulfurimonas denitrificans (strain ATCC 33889 / DSM 1251) (Thiomicrospira denitrificans (strain ATCC 33889 / DSM 1251)).